Consider the following 624-residue polypeptide: APC membrane recruitment protein 2 (624 aa).

Disordered regions lie at residues 77–111, 126–177, 195–230, 342–369, and 397–588; these read EEPCTNAGAGQLNTEKSPKVVTINPDVSSDSSVAK, ENVK…GLIL, PLCEKEKSEEDIPADVPSVEHSGDVNTSAEENPLNG, ADQDDDGGSSKGSKVVPGNGKKVTSKKN, and FSMI…ELPR. Positions 102 to 111 are enriched in low complexity; the sequence is DVSSDSSVAK. Basic and acidic residues-rich tracts occupy residues 155–168 and 195–204; these read SKKDKSYKDDKEGA and PLCEKEKSEE. Residues 352 to 363 are compositionally biased toward low complexity; the sequence is KGSKVVPGNGKK. Basic and acidic residues-rich tracts occupy residues 422–435 and 450–469; these read REVKCSDSGRDRNT and ERGDQNSKGNEKRQCHRNSD.

The protein belongs to the Amer family.

The protein localises to the cell membrane. In terms of biological role, negative regulator of the canonical Wnt signaling pathway involved in neuroectodermal patterning. Acts by specifically binding phosphatidylinositol 4,5-bisphosphate (PtdIns(4,5)P2), translocating to the cell membrane and interacting with key regulators of the canonical Wnt signaling pathway, such as components of the beta-catenin destruction complex. The sequence is that of APC membrane recruitment protein 2 (amer2) from Xenopus laevis (African clawed frog).